We begin with the raw amino-acid sequence, 305 residues long: Mycothiol acetyltransferase (305 aa).

N-acetyltransferase domains follow at residues 10-154 (DRLD…VVLE) and 156-305 (ISLR…YARA). Glu-38 serves as a coordination point for 1D-myo-inositol 2-(L-cysteinylamino)-2-deoxy-alpha-D-glucopyranoside. 82-84 (LAV) serves as a coordination point for acetyl-CoA. 1D-myo-inositol 2-(L-cysteinylamino)-2-deoxy-alpha-D-glucopyranoside-binding residues include Glu-183, Lys-225, and Glu-238. Residues 242–244 (VAI) and 249–255 (QGRGLGR) each bind acetyl-CoA. Tyr-276 lines the 1D-myo-inositol 2-(L-cysteinylamino)-2-deoxy-alpha-D-glucopyranoside pocket. Residue 281 to 286 (NASALH) coordinates acetyl-CoA.

This sequence belongs to the acetyltransferase family. MshD subfamily. Monomer.

The enzyme catalyses 1D-myo-inositol 2-(L-cysteinylamino)-2-deoxy-alpha-D-glucopyranoside + acetyl-CoA = mycothiol + CoA + H(+). In terms of biological role, catalyzes the transfer of acetyl from acetyl-CoA to desacetylmycothiol (Cys-GlcN-Ins) to form mycothiol. This Rhodococcus opacus (strain B4) protein is Mycothiol acetyltransferase.